The following is a 261-amino-acid chain: Indole-3-glycerol phosphate synthase (261 aa).

It belongs to the TrpC family.

It catalyses the reaction 1-(2-carboxyphenylamino)-1-deoxy-D-ribulose 5-phosphate + H(+) = (1S,2R)-1-C-(indol-3-yl)glycerol 3-phosphate + CO2 + H2O. The protein operates within amino-acid biosynthesis; L-tryptophan biosynthesis; L-tryptophan from chorismate: step 4/5. This is Indole-3-glycerol phosphate synthase from Alkaliphilus metalliredigens (strain QYMF).